A 254-amino-acid polypeptide reads, in one-letter code: Phosphoribosylaminoimidazole-succinocarboxamide synthase (254 aa).

The protein belongs to the SAICAR synthetase family.

It carries out the reaction 5-amino-1-(5-phospho-D-ribosyl)imidazole-4-carboxylate + L-aspartate + ATP = (2S)-2-[5-amino-1-(5-phospho-beta-D-ribosyl)imidazole-4-carboxamido]succinate + ADP + phosphate + 2 H(+). The protein operates within purine metabolism; IMP biosynthesis via de novo pathway; 5-amino-1-(5-phospho-D-ribosyl)imidazole-4-carboxamide from 5-amino-1-(5-phospho-D-ribosyl)imidazole-4-carboxylate: step 1/2. The protein is Phosphoribosylaminoimidazole-succinocarboxamide synthase of Rhizobium meliloti (strain 1021) (Ensifer meliloti).